The chain runs to 78 residues: RNA-binding protein Hfq (78 aa).

The 60-residue stretch at 10-69 (DPFLNALRKEHVPVSIYLVNGIKLQGNIESFDQYVVLLRNTVTQMVYKHAISTVVPARPV) folds into the Sm domain.

This sequence belongs to the Hfq family. Homohexamer.

In terms of biological role, RNA chaperone that binds small regulatory RNA (sRNAs) and mRNAs to facilitate mRNA translational regulation in response to envelope stress, environmental stress and changes in metabolite concentrations. Also binds with high specificity to tRNAs. The protein is RNA-binding protein Hfq of Paraburkholderia phymatum (strain DSM 17167 / CIP 108236 / LMG 21445 / STM815) (Burkholderia phymatum).